The primary structure comprises 583 residues: Chromosomal replication initiator protein DnaA (583 aa).

The domain I, interacts with DnaA modulators stretch occupies residues 1 to 91 (MNAENLDPAT…SPMFPAFKVM (91 aa)). Disordered stretches follow at residues 86–179 (PAFK…QQPV) and 197–232 (VAGFGPSVAGTTAPQYPPQSEMQGSFTPGVTGNYRD). The interval 91–235 (MPPAQPEPQT…VTGNYRDPVT (145 aa)) is domain II. Polar residues predominate over residues 97–106 (EPQTTASPED). Composition is skewed to basic and acidic residues over residues 126–135 (EDSRTPRHSA) and 147–174 (QEREDSAVHMARPDEQTAESHREPEHEP). Residues 205–226 (AGTTAPQYPPQSEMQGSFTPGV) show a composition bias toward polar residues. A domain III, AAA+ region region spans residues 236 to 460 (HLNSNDTFDT…GALKRVIAMA (225 aa)). G280, G282, K283, and T284 together coordinate ATP. Residues 461–583 (SLNHQPVTRA…TVELKQHLND (123 aa)) form a domain IV, binds dsDNA region.

The protein belongs to the DnaA family. In terms of assembly, oligomerizes as a right-handed, spiral filament on DNA at oriC.

Its subcellular location is the cytoplasm. Its function is as follows. Plays an essential role in the initiation and regulation of chromosomal replication. ATP-DnaA binds to the origin of replication (oriC) to initiate formation of the DNA replication initiation complex once per cell cycle. Binds the DnaA box (a 9 base pair repeat at the origin) and separates the double-stranded (ds)DNA. Forms a right-handed helical filament on oriC DNA; dsDNA binds to the exterior of the filament while single-stranded (ss)DNA is stabiized in the filament's interior. The ATP-DnaA-oriC complex binds and stabilizes one strand of the AT-rich DNA unwinding element (DUE), permitting loading of DNA polymerase. After initiation quickly degrades to an ADP-DnaA complex that is not apt for DNA replication. Binds acidic phospholipids. This Bifidobacterium animalis subsp. lactis (strain AD011) protein is Chromosomal replication initiator protein DnaA.